Here is a 350-residue protein sequence, read N- to C-terminus: Probable choline kinase 2 (350 aa).

Residues R73, Q210, and D227 each coordinate ATP.

Belongs to the choline/ethanolamine kinase family.

It catalyses the reaction choline + ATP = phosphocholine + ADP + H(+). It participates in phospholipid metabolism; phosphatidylcholine biosynthesis; phosphocholine from choline: step 1/1. In terms of biological role, involved in phospholipid biosynthesis. Catalyzes the first step in phosphatidylcholine biosynthesis. This is Probable choline kinase 2 from Arabidopsis thaliana (Mouse-ear cress).